Consider the following 356-residue polypeptide: Uroporphyrinogen decarboxylase (356 aa).

Residues 23–27 (RQAGR), aspartate 72, tyrosine 148, serine 203, and histidine 321 each bind substrate.

Belongs to the uroporphyrinogen decarboxylase family. Homodimer.

It localises to the cytoplasm. The enzyme catalyses uroporphyrinogen III + 4 H(+) = coproporphyrinogen III + 4 CO2. The protein operates within porphyrin-containing compound metabolism; protoporphyrin-IX biosynthesis; coproporphyrinogen-III from 5-aminolevulinate: step 4/4. Functionally, catalyzes the decarboxylation of four acetate groups of uroporphyrinogen-III to yield coproporphyrinogen-III. In Chloroflexus aggregans (strain MD-66 / DSM 9485), this protein is Uroporphyrinogen decarboxylase.